The following is a 197-amino-acid chain: Probable GTP-binding protein EngB (197 aa).

Residues 22–195 (GFPEIGLAGR…WQWIEAHTVG (174 aa)) form the EngB-type G domain. GTP-binding positions include 30–37 (GRSNVGKS), 57–61 (GKTQT), 75–78 (DVPG), 142–145 (TKSD), and 174–176 (FSA). Mg(2+) contacts are provided by Ser37 and Thr59.

The protein belongs to the TRAFAC class TrmE-Era-EngA-EngB-Septin-like GTPase superfamily. EngB GTPase family. Mg(2+) is required as a cofactor.

In terms of biological role, necessary for normal cell division and for the maintenance of normal septation. This is Probable GTP-binding protein EngB from Lactiplantibacillus plantarum (strain ATCC BAA-793 / NCIMB 8826 / WCFS1) (Lactobacillus plantarum).